A 117-amino-acid polypeptide reads, in one-letter code: MAVYVKFKVPEEIQKELLDAVAKAQKIKKGANEVTKAVERGIAKLVIIAEDVKPEEVVAHLPYLCEEKGIPYAYVASKQDLGKAAGLEVAASSVAIINEGDAEELKVLIEKVNVLKQ.

It belongs to the eukaryotic ribosomal protein eL8 family. In terms of assembly, part of the 50S ribosomal subunit. Probably part of the RNase P complex.

Its subcellular location is the cytoplasm. Functionally, multifunctional RNA-binding protein that recognizes the K-turn motif in ribosomal RNA, the RNA component of RNase P, box H/ACA, box C/D and box C'/D' sRNAs. This chain is Large ribosomal subunit protein eL8, found in Methanocaldococcus jannaschii (strain ATCC 43067 / DSM 2661 / JAL-1 / JCM 10045 / NBRC 100440) (Methanococcus jannaschii).